The primary structure comprises 514 residues: Flagellin B (514 aa).

Belongs to the bacterial flagellin family. Heteromer of FlaA and FlaB. FlaB is located proximal to the hook while the remainder of the filament is composed of the predominant FlaA.

The protein localises to the secreted. The protein resides in the bacterial flagellum. Its function is as follows. Flagellin is the subunit protein which polymerizes to form the filaments of bacterial flagella. Important for motility and virulence. In Helicobacter pylori (strain J99 / ATCC 700824) (Campylobacter pylori J99), this protein is Flagellin B (flaB).